Reading from the N-terminus, the 275-residue chain is Phosphate import ATP-binding protein PstB (275 aa).

The ABC transporter domain maps to 29 to 270 (LEIKDLDLYY…PNKKKTEDYI (242 aa)). 61–68 (GPSGCGKS) provides a ligand contact to ATP.

This sequence belongs to the ABC transporter superfamily. Phosphate importer (TC 3.A.1.7) family. As to quaternary structure, the complex is composed of two ATP-binding proteins (PstB), two transmembrane proteins (PstC and PstA) and a solute-binding protein (PstS).

It is found in the cell inner membrane. It carries out the reaction phosphate(out) + ATP + H2O = ADP + 2 phosphate(in) + H(+). Its function is as follows. Part of the ABC transporter complex PstSACB involved in phosphate import. Responsible for energy coupling to the transport system. This chain is Phosphate import ATP-binding protein PstB, found in Pseudoalteromonas translucida (strain TAC 125).